Consider the following 215-residue polypeptide: Histidine biosynthesis bifunctional protein HisIE (215 aa).

The phosphoribosyl-AMP cyclohydrolase stretch occupies residues 1-114 (MLKKHDLLNL…FISNKYNINF (114 aa)). Residues 115 to 215 (LFKLEEIIEE…LNTNSEKLLK (101 aa)) are phosphoribosyl-ATP pyrophosphohydrolase.

In the N-terminal section; belongs to the PRA-CH family. The protein in the C-terminal section; belongs to the PRA-PH family.

Its subcellular location is the cytoplasm. It carries out the reaction 1-(5-phospho-beta-D-ribosyl)-ATP + H2O = 1-(5-phospho-beta-D-ribosyl)-5'-AMP + diphosphate + H(+). The catalysed reaction is 1-(5-phospho-beta-D-ribosyl)-5'-AMP + H2O = 1-(5-phospho-beta-D-ribosyl)-5-[(5-phospho-beta-D-ribosylamino)methylideneamino]imidazole-4-carboxamide. The protein operates within amino-acid biosynthesis; L-histidine biosynthesis; L-histidine from 5-phospho-alpha-D-ribose 1-diphosphate: step 2/9. Its pathway is amino-acid biosynthesis; L-histidine biosynthesis; L-histidine from 5-phospho-alpha-D-ribose 1-diphosphate: step 3/9. The sequence is that of Histidine biosynthesis bifunctional protein HisIE (hisI) from Buchnera aphidicola subsp. Acyrthosiphon pisum (strain APS) (Acyrthosiphon pisum symbiotic bacterium).